The following is a 182-amino-acid chain: Ribosome-recycling factor (182 aa).

It belongs to the RRF family.

It is found in the cytoplasm. In terms of biological role, responsible for the release of ribosomes from messenger RNA at the termination of protein biosynthesis. May increase the efficiency of translation by recycling ribosomes from one round of translation to another. The polypeptide is Ribosome-recycling factor (Prochlorococcus marinus subsp. pastoris (strain CCMP1986 / NIES-2087 / MED4)).